Reading from the N-terminus, the 464-residue chain is Dihydrolipoyllysine-residue succinyltransferase component of 2-oxoglutarate dehydrogenase complex 1, mitochondrial (464 aa).

The transit peptide at 1-86 (MMLRAVFRRA…TALQRWVRPF (86 aa)) directs the protein to the mitochondrion. The 76-residue stretch at 93 to 168 (VVEAVVPHMG…EPGNKVARIS (76 aa)) folds into the Lipoyl-binding domain. The residue at position 134 (Lys134) is an N6-lipoyllysine. Residues 168–242 (STSADAVSHV…DRERRVPMTR (75 aa)) form a disordered region. Basic and acidic residues predominate over residues 196–210 (EKPKVESTKVAEKPK). The segment covering 211–220 (APSPPPPPPS) has biased composition (pro residues). Catalysis depends on residues His435 and Asp439.

The protein belongs to the 2-oxoacid dehydrogenase family. As to quaternary structure, forms a 24-polypeptide structural core with octahedral symmetry. The cofactor is (R)-lipoate.

Its subcellular location is the mitochondrion. The catalysed reaction is N(6)-[(R)-dihydrolipoyl]-L-lysyl-[protein] + succinyl-CoA = N(6)-[(R)-S(8)-succinyldihydrolipoyl]-L-lysyl-[protein] + CoA. Its pathway is amino-acid degradation; L-lysine degradation via saccharopine pathway; glutaryl-CoA from L-lysine: step 6/6. The 2-oxoglutarate dehydrogenase complex catalyzes the overall conversion of 2-oxoglutarate to succinyl-CoA and CO(2). It contains multiple copies of three enzymatic components: 2-oxoglutarate dehydrogenase (E1), dihydrolipoamide succinyltransferase (E2) and lipoamide dehydrogenase (E3). This Arabidopsis thaliana (Mouse-ear cress) protein is Dihydrolipoyllysine-residue succinyltransferase component of 2-oxoglutarate dehydrogenase complex 1, mitochondrial.